The primary structure comprises 385 residues: Lipid-A-disaccharide synthase 2 (385 aa).

This sequence belongs to the LpxB family.

It catalyses the reaction a lipid X + a UDP-2-N,3-O-bis[(3R)-3-hydroxyacyl]-alpha-D-glucosamine = a lipid A disaccharide + UDP + H(+). Its pathway is bacterial outer membrane biogenesis; LPS lipid A biosynthesis. Condensation of UDP-2,3-diacylglucosamine and 2,3-diacylglucosamine-1-phosphate to form lipid A disaccharide, a precursor of lipid A, a phosphorylated glycolipid that anchors the lipopolysaccharide to the outer membrane of the cell. This is Lipid-A-disaccharide synthase 2 from Legionella pneumophila (strain Lens).